Consider the following 227-residue polypeptide: (S)-2-haloacid dehalogenase (227 aa).

The active-site Nucleophile is D10. An (S)-2-haloacid contacts are provided by residues 11–12 (LY), R41, and 118–119 (SN). The important for catalytic activity stretch occupies residues 175–180 (SSNAWD).

This sequence belongs to the HAD-like hydrolase superfamily. S-2-haloalkanoic acid dehalogenase family. In terms of assembly, homotetramer.

It carries out the reaction an (S)-2-haloacid + H2O = a (2R)-2-hydroxycarboxylate + a halide anion + H(+). It catalyses the reaction (S)-2-chloropropanoate + H2O = (R)-lactate + chloride + H(+). Its function is as follows. Catalyzes the hydrolytic dehalogenation of small (S)-2-haloalkanoic acids to yield the corresponding (R)-2-hydroxyalkanoic acids. Acts on acids of short chain lengths, C(2) to C(4), with inversion of configuration at C-2. Active with 2-halogenated carboxylic acids and converts only the S-isomer (or L-isomer) of 2-chloropropionic acid with inversion of configuration to produce R-lactate (or D-isomer). This chain is (S)-2-haloacid dehalogenase, found in Pseudomonas putida (Arthrobacter siderocapsulatus).